The primary structure comprises 672 residues: Acetoacetyl-CoA synthetase (672 aa).

Belongs to the ATP-dependent AMP-binding enzyme family.

It is found in the cytoplasm. Its subcellular location is the cytosol. The enzyme catalyses acetoacetate + ATP + CoA = acetoacetyl-CoA + AMP + diphosphate. Activates acetoacetate to acetoacetyl-CoA. This chain is Acetoacetyl-CoA synthetase (aacs), found in Xenopus tropicalis (Western clawed frog).